A 429-amino-acid polypeptide reads, in one-letter code: Glutamate-1-semialdehyde 2,1-aminomutase 2 (429 aa).

An N6-(pyridoxal phosphate)lysine modification is found at Lys268.

Belongs to the class-III pyridoxal-phosphate-dependent aminotransferase family. HemL subfamily. As to quaternary structure, homodimer. Pyridoxal 5'-phosphate is required as a cofactor.

Its subcellular location is the cytoplasm. The enzyme catalyses (S)-4-amino-5-oxopentanoate = 5-aminolevulinate. Its pathway is porphyrin-containing compound metabolism; protoporphyrin-IX biosynthesis; 5-aminolevulinate from L-glutamyl-tRNA(Glu): step 2/2. The sequence is that of Glutamate-1-semialdehyde 2,1-aminomutase 2 from Bacillus cereus (strain AH820).